The chain runs to 90 residues: Acylphosphatase (90 aa).

Residues 3–90 form the Acylphosphatase-like domain; the sequence is AIEVDVFGLV…FETNDFAIRG (88 aa). Catalysis depends on residues arginine 18 and asparagine 36.

Belongs to the acylphosphatase family.

It carries out the reaction an acyl phosphate + H2O = a carboxylate + phosphate + H(+). The chain is Acylphosphatase (acyP) from Leuconostoc mesenteroides subsp. mesenteroides (strain ATCC 8293 / DSM 20343 / BCRC 11652 / CCM 1803 / JCM 6124 / NCDO 523 / NBRC 100496 / NCIMB 8023 / NCTC 12954 / NRRL B-1118 / 37Y).